Reading from the N-terminus, the 688-residue chain is Elongation factor G (688 aa).

The tr-type G domain occupies 8 to 282 (EKFRNFGIMA…GVVDYLPSPL (275 aa)). GTP is bound by residues 17-24 (AHIDAGKT), 81-85 (DTPGH), and 135-138 (NKMD).

The protein belongs to the TRAFAC class translation factor GTPase superfamily. Classic translation factor GTPase family. EF-G/EF-2 subfamily.

It is found in the cytoplasm. Its function is as follows. Catalyzes the GTP-dependent ribosomal translocation step during translation elongation. During this step, the ribosome changes from the pre-translocational (PRE) to the post-translocational (POST) state as the newly formed A-site-bound peptidyl-tRNA and P-site-bound deacylated tRNA move to the P and E sites, respectively. Catalyzes the coordinated movement of the two tRNA molecules, the mRNA and conformational changes in the ribosome. The protein is Elongation factor G of Clostridium perfringens (strain ATCC 13124 / DSM 756 / JCM 1290 / NCIMB 6125 / NCTC 8237 / Type A).